A 333-amino-acid chain; its full sequence is SPbeta prophage-derived recombinase-like protein YomM (333 aa).

In terms of domain architecture, Core-binding (CB) spans 30–113 (EEHRNLVQEF…GVSSLNNYIE (84 aa)). Residues 142-332 (YEKVKVTYDD…DFEEEKNQIF (191 aa)) form the Tyr recombinase domain. Residues Arg180, Lys211, His281, and His308 contribute to the active site. The active-site O-(3'-phospho-DNA)-tyrosine intermediate is Tyr319.

The protein belongs to the 'phage' integrase family.

The sequence is that of SPbeta prophage-derived recombinase-like protein YomM (yomM) from Bacillus subtilis (strain 168).